A 130-amino-acid polypeptide reads, in one-letter code: MTLLDPLANALSHITNSERVGKREIYIKPASKLIGEVLRVMQKYGYIGEFEFIDDGRAGVYRVQLLGRINKAGAIKPRFPVKATEYEKWEKRFLPAFEFGILIVSTSQGVMSHKEARDRGIGGRLIAYVY.

Belongs to the universal ribosomal protein uS8 family. Part of the 30S ribosomal subunit.

Functionally, one of the primary rRNA binding proteins, it binds directly to 16S rRNA central domain where it helps coordinate assembly of the platform of the 30S subunit. The sequence is that of Small ribosomal subunit protein uS8 from Pyrococcus horikoshii (strain ATCC 700860 / DSM 12428 / JCM 9974 / NBRC 100139 / OT-3).